A 29-amino-acid polypeptide reads, in one-letter code: Small toxic protein TisB (29 aa).

A helical transmembrane segment spans residues 6–28; sequence IAILILKLIVAALQLLDAVLKYL.

The protein resides in the cell inner membrane. Functionally, toxic component of a type I toxin-antitoxin (TA) system. Overexpression causes cessation of growth, induces stress-response, a number of membrane protein genes, and leads to cell death. Inhibits ATP synthesis, ATP levels drop drastically quickly after induction. Part of the programmed response to DNA damage; damage leads to increased accumulation of the protein which slows or stops bacterial growth, probably allowing DNA repair before cells continue to grow. In Escherichia coli (strain K12), this protein is Small toxic protein TisB (tisB).